The chain runs to 169 residues: Small ribosomal subunit protein uS5 (169 aa).

Residues 14–77 form the S5 DRBM domain; it reads LQEKLVAVRR…EQARKNMRKV (64 aa).

This sequence belongs to the universal ribosomal protein uS5 family. Part of the 30S ribosomal subunit. Contacts proteins S4 and S8.

In terms of biological role, with S4 and S12 plays an important role in translational accuracy. Functionally, located at the back of the 30S subunit body where it stabilizes the conformation of the head with respect to the body. The protein is Small ribosomal subunit protein uS5 of Methylococcus capsulatus (strain ATCC 33009 / NCIMB 11132 / Bath).